Consider the following 169-residue polypeptide: ATP synthase subunit b (169 aa).

The chain crosses the membrane as a helical span at residues 14 to 34; sequence TFLAMLISFLILVFILQQVAF.

It belongs to the ATPase B chain family. As to quaternary structure, F-type ATPases have 2 components, F(1) - the catalytic core - and F(0) - the membrane proton channel. F(1) has five subunits: alpha(3), beta(3), gamma(1), delta(1), epsilon(1). F(0) has four main subunits: a(1), b(2) and c(10-14). The alpha and beta chains form an alternating ring which encloses part of the gamma chain. F(1) is attached to F(0) by a central stalk formed by the gamma and epsilon chains, while a peripheral stalk is formed by the delta and b chains.

The protein localises to the cell membrane. In terms of biological role, f(1)F(0) ATP synthase produces ATP from ADP in the presence of a proton or sodium gradient. F-type ATPases consist of two structural domains, F(1) containing the extramembraneous catalytic core and F(0) containing the membrane proton channel, linked together by a central stalk and a peripheral stalk. During catalysis, ATP synthesis in the catalytic domain of F(1) is coupled via a rotary mechanism of the central stalk subunits to proton translocation. Component of the F(0) channel, it forms part of the peripheral stalk, linking F(1) to F(0). The chain is ATP synthase subunit b from Heliobacterium modesticaldum (strain ATCC 51547 / Ice1).